Reading from the N-terminus, the 417-residue chain is Gamma-glutamyl phosphate reductase (417 aa).

It belongs to the gamma-glutamyl phosphate reductase family.

It localises to the cytoplasm. The catalysed reaction is L-glutamate 5-semialdehyde + phosphate + NADP(+) = L-glutamyl 5-phosphate + NADPH + H(+). It participates in amino-acid biosynthesis; L-proline biosynthesis; L-glutamate 5-semialdehyde from L-glutamate: step 2/2. Functionally, catalyzes the NADPH-dependent reduction of L-glutamate 5-phosphate into L-glutamate 5-semialdehyde and phosphate. The product spontaneously undergoes cyclization to form 1-pyrroline-5-carboxylate. This is Gamma-glutamyl phosphate reductase from Phocaeicola vulgatus (strain ATCC 8482 / DSM 1447 / JCM 5826 / CCUG 4940 / NBRC 14291 / NCTC 11154) (Bacteroides vulgatus).